Reading from the N-terminus, the 239-residue chain is Ureidoacrylate amidohydrolase RutB (239 aa).

Aspartate 35 serves as the catalytic Proton acceptor. Residue lysine 144 is part of the active site. Cysteine 177 acts as the Nucleophile in catalysis.

It belongs to the isochorismatase family. RutB subfamily.

The enzyme catalyses (Z)-3-ureidoacrylate + H2O + H(+) = (Z)-3-aminoacrylate + NH4(+) + CO2. It catalyses the reaction (Z)-3-ureidoacrylate + H2O = (Z)-3-aminoacrylate + carbamate + H(+). It carries out the reaction (Z)-2-methylureidoacrylate + H2O + H(+) = (Z)-2-methylaminoacrylate + NH4(+) + CO2. In terms of biological role, hydrolyzes ureidoacrylate to form aminoacrylate and carbamate. The carbamate hydrolyzes spontaneously, thereby releasing one of the nitrogen atoms of the pyrimidine ring as ammonia and one of its carbon atoms as CO2. The polypeptide is Ureidoacrylate amidohydrolase RutB (Caulobacter segnis (strain ATCC 21756 / DSM 7131 / JCM 7823 / NBRC 15250 / LMG 17158 / TK0059) (Mycoplana segnis)).